The sequence spans 158 residues: Ribosome maturation factor RimP (158 aa).

It belongs to the RimP family.

The protein resides in the cytoplasm. Its function is as follows. Required for maturation of 30S ribosomal subunits. This Leuconostoc mesenteroides subsp. mesenteroides (strain ATCC 8293 / DSM 20343 / BCRC 11652 / CCM 1803 / JCM 6124 / NCDO 523 / NBRC 100496 / NCIMB 8023 / NCTC 12954 / NRRL B-1118 / 37Y) protein is Ribosome maturation factor RimP.